The chain runs to 388 residues: 1-deoxy-D-xylulose 5-phosphate reductoisomerase (388 aa).

Residues Thr10, Gly11, Thr12, Ile13, Arg37, Gln38, and Asn122 each contribute to the NADPH site. Lys123 contributes to the 1-deoxy-D-xylulose 5-phosphate binding site. Glu124 serves as a coordination point for NADPH. Asp148 serves as a coordination point for Mn(2+). Ser149, Glu150, Ser179, and His202 together coordinate 1-deoxy-D-xylulose 5-phosphate. Glu150 serves as a coordination point for Mn(2+). Gly208 contacts NADPH. Ser215, Asn220, Lys221, and Glu224 together coordinate 1-deoxy-D-xylulose 5-phosphate. Glu224 contacts Mn(2+).

The protein belongs to the DXR family. Mg(2+) is required as a cofactor. Mn(2+) serves as cofactor.

It catalyses the reaction 2-C-methyl-D-erythritol 4-phosphate + NADP(+) = 1-deoxy-D-xylulose 5-phosphate + NADPH + H(+). It functions in the pathway isoprenoid biosynthesis; isopentenyl diphosphate biosynthesis via DXP pathway; isopentenyl diphosphate from 1-deoxy-D-xylulose 5-phosphate: step 1/6. Functionally, catalyzes the NADPH-dependent rearrangement and reduction of 1-deoxy-D-xylulose-5-phosphate (DXP) to 2-C-methyl-D-erythritol 4-phosphate (MEP). This chain is 1-deoxy-D-xylulose 5-phosphate reductoisomerase, found in Laribacter hongkongensis (strain HLHK9).